The primary structure comprises 325 residues: Phospholipid phosphatase-related protein type 1 (325 aa).

N-linked (GlcNAc...) asparagine glycosylation is present at Asn-5. 3 helical membrane passes run 13 to 33, 67 to 87, and 127 to 147; these read IIPCFIFVELVIMAGTVLLAY, FITPLVLYCVLAATPTAIIFI, and FTGVFAFGLFATDIFVNAGQV. Asn-163 carries N-linked (GlcNAc...) asparagine glycosylation. Helical transmembrane passes span 201-218, 230-247, and 257-277; these read AALSIYSALYATMYITST, VLCLGTLCTAFLTGLNRV, and VIAGFILGTAVALFLGMCVVH. Ser-307 carries the post-translational modification Phosphoserine. Residue Asn-316 is glycosylated (N-linked (GlcNAc...) asparagine).

It belongs to the PA-phosphatase related phosphoesterase family.

Its subcellular location is the cell membrane. The protein localises to the cell projection. It localises to the neuron projection. In terms of biological role, may play a role in neurite outgrowth and neurogenesis. The polypeptide is Phospholipid phosphatase-related protein type 1 (Homo sapiens (Human)).